A 309-amino-acid chain; its full sequence is 2-dehydropantoate 2-reductase (309 aa).

Residues 7 to 12, Arg31, and Lys74 contribute to the NADP(+) site; that span reads GAGSIG. CoA-binding positions include 8–10, Arg31, Lys74, and Cys84; that span reads AGS. Positions 100 and 124 each coordinate NADP(+). Residue Lys180 is the Proton donor of the active site. Residues Lys180, Asn184, Asn188, Asn198, and 247–250 contribute to the substrate site; that span reads NYNS. CoA is bound at residue Arg257. An NADP(+)-binding site is contributed by Glu262.

Belongs to the ketopantoate reductase family. As to quaternary structure, homodimer.

The protein resides in the cytoplasm. The enzyme catalyses (R)-pantoate + NAD(+) = 2-dehydropantoate + NADH + H(+). It catalyses the reaction (R)-pantoate + NADP(+) = 2-dehydropantoate + NADPH + H(+). Its pathway is cofactor biosynthesis; coenzyme A biosynthesis. Its activity is regulated as follows. Regulated by feedback inhibition by coenzyme A (CoA). CoA acts by competing with NAD(P)H. A disulfide bond is formed between CoA and Cys-84, which indicates an irreversible inhibition upon binding of CoA. In terms of biological role, catalyzes the NAD(P)H-dependent reduction of ketopantoate into pantoic acid. Prefers NADH rather than NADPH as the electron donor. This is 2-dehydropantoate 2-reductase from Thermococcus kodakarensis (strain ATCC BAA-918 / JCM 12380 / KOD1) (Pyrococcus kodakaraensis (strain KOD1)).